Here is a 1113-residue protein sequence, read N- to C-terminus: Period circadian protein homolog 3 (1113 aa).

The disordered stretch occupies residues 1 to 48; the sequence is MDPCGDPAVPGGDCPQTRGPGLQGASGQEGPLQGTCVDSSHSEHEDRN. The Nuclear export signal 1 motif lies at 54-63; the sequence is LIMVVQEMKK. 2 PAS domains span residues 120 to 187 and 258 to 324; these read LASE…PTQL and YEAP…KVLK. The PAC domain maps to 333 to 376; that stretch reads HSPVRFCTQNGEYVILDSSWSSFVNPWSRKVSFIIGRHKVRTSP. The Nuclear export signal 3 signature appears at 399-408; sequence LQEQIHKLLL. Over residues 418-427 the composition is skewed to low complexity; sequence GYGSLGSSGS. Disordered stretches follow at residues 418–451, 485–530, 561–580, 718–742, and 871–906; these read GYGSLGSSGSQEQHVSITSSSESSGHCPEEGQHE, VAET…SSSY, TSSSSEEAKPIPEVDSSQRD, HSRCAGSERQKHKRKKLPAPVDTSS, and LVPAMAPNPEPTTSGHSQRRVEENWEAHSEELPFIS. 2 stretches are compositionally biased toward polar residues: residues 428 to 441 and 501 to 530; these read QEQHVSITSSSESS and FSSSQTLKNKSTTDTGSGGNLQQEQPSSSY. The segment at 551–750 is CSNK1E binding domain; the sequence is LKRKCISCTN…SSPGAHLCPH (200 aa). The segment covering 566-580 has biased composition (basic and acidic residues); it reads EEAKPIPEVDSSQRD. Positions 719-735 match the Nuclear localization signal motif; it reads SRCAGSERQKHKRKKLP. Positions 889 to 901 are enriched in basic and acidic residues; the sequence is RRVEENWEAHSEE. Position 907 is a phosphoserine (serine 907). The Nuclear export signal 2 signature appears at 913–920; that stretch reads LQLNLLQE. Residues 921–1010 are disordered; it reads EMPAPSESAD…DRQRDEALPG (90 aa). The segment covering 962-986 has biased composition (low complexity); it reads ATATAQQESAAASGSSASSIYFSST. A compositionally biased stretch (basic and acidic residues) spans 993-1007; it reads SENRQRPQDRQRDEA. The CRY binding domain stretch occupies residues 1035 to 1113; that stretch reads ERGREEVLKQ…LEQHPAEDTS (79 aa).

In terms of assembly, homodimer. Component of the circadian core oscillator, which includes the CRY proteins, CLOCK or NPAS2, BMAL1 or BMAL2, CSNK1D and/or CSNK1E, TIMELESS and the PER proteins. Interacts directly with PER1, PER2, CRY1, CRY2, and TIMELESS; interaction with CRY1 and CRY2 is weak and not rhythmic. Interacts with FBXW11 and BTRC. Post-translationally, phosphorylation by CSNK1E is weak and appears to require association with PER1 and translocation to the nucleus. In terms of processing, ubiquitinated. In terms of tissue distribution, widely expressed. Expressed in heart, brain, lung, liver, skeletal muscle, testis, and at low level in the spleen and kidney. In brain, mainly found in the SCN, hippocampus, piriform cortex, and cerebellum. Lower level of expression in the neocortex. Expression exhibits synchronous oscillations in liver, skeletal muscle and testis.

The protein localises to the cytoplasm. The protein resides in the nucleus. In terms of biological role, originally described as a core component of the circadian clock. The circadian clock, an internal time-keeping system, regulates various physiological processes through the generation of approximately 24 hour circadian rhythms in gene expression, which are translated into rhythms in metabolism and behavior. It is derived from the Latin roots 'circa' (about) and 'diem' (day) and acts as an important regulator of a wide array of physiological functions including metabolism, sleep, body temperature, blood pressure, endocrine, immune, cardiovascular, and renal function. Consists of two major components: the central clock, residing in the suprachiasmatic nucleus (SCN) of the brain, and the peripheral clocks that are present in nearly every tissue and organ system. Both the central and peripheral clocks can be reset by environmental cues, also known as Zeitgebers (German for 'timegivers'). The predominant Zeitgeber for the central clock is light, which is sensed by retina and signals directly to the SCN. The central clock entrains the peripheral clocks through neuronal and hormonal signals, body temperature and feeding-related cues, aligning all clocks with the external light/dark cycle. Circadian rhythms allow an organism to achieve temporal homeostasis with its environment at the molecular level by regulating gene expression to create a peak of protein expression once every 24 hours to control when a particular physiological process is most active with respect to the solar day. Transcription and translation of core clock components (CLOCK, NPAS2, BMAL1, BMAL2, PER1, PER2, PER3, CRY1 and CRY2) plays a critical role in rhythm generation, whereas delays imposed by post-translational modifications (PTMs) are important for determining the period (tau) of the rhythms (tau refers to the period of a rhythm and is the length, in time, of one complete cycle). A diurnal rhythm is synchronized with the day/night cycle, while the ultradian and infradian rhythms have a period shorter and longer than 24 hours, respectively. Disruptions in the circadian rhythms contribute to the pathology of cardiovascular diseases, cancer, metabolic syndromes and aging. A transcription/translation feedback loop (TTFL) forms the core of the molecular circadian clock mechanism. Transcription factors, CLOCK or NPAS2 and BMAL1 or BMAL2, form the positive limb of the feedback loop, act in the form of a heterodimer and activate the transcription of core clock genes and clock-controlled genes (involved in key metabolic processes), harboring E-box elements (5'-CACGTG-3') within their promoters. The core clock genes: PER1/2/3 and CRY1/2 which are transcriptional repressors form the negative limb of the feedback loop and interact with the CLOCK|NPAS2-BMAL1|BMAL2 heterodimer inhibiting its activity and thereby negatively regulating their own expression. This heterodimer also activates nuclear receptors NR1D1, NR1D2, RORA, RORB and RORG, which form a second feedback loop and which activate and repress BMAL1 transcription, respectively. Has a redundant role with the other PER proteins PER1 and PER2 and is not essential for the circadian rhythms maintenance. In contrast, plays an important role in sleep-wake timing and sleep homeostasis probably through the transcriptional regulation of sleep homeostasis-related genes, without influencing circadian parameters. Can bind heme. This is Period circadian protein homolog 3 (Per3) from Mus musculus (Mouse).